The chain runs to 739 residues: Sulfate transporter (739 aa).

A disordered region spans residues 1–44 (MSSENKEQHNLSPRDLPEEAYGFPPELPLGAQRGSSTDLRQFEP). S12 is modified (phosphoserine). Transmembrane regions (helical) follow at residues 112 to 132 (MMSGLIVGILLVPQSIAYSLL) and 137 to 157 (PIYGLYTSFFASIIYFLFGTS). N205 is a glycosylation site (N-linked (GlcNAc...) asparagine). A run of 2 helical transmembrane segments spans residues 227–247 (FMAGVYQVAMGFFQVGFVSVY) and 255–275 (GFVTGASFTILTSQAKYLLGL). A glycan (N-linked (GlcNAc...) asparagine) is linked at N357. The next 4 membrane-spanning stretches (helical) occupy residues 378–398 (LIPNVAVDAIAISIIGFAITV), 420–440 (AIGFCNIIPSFFHCITTSAAL), 455–475 (LSAIVTSLVLLLVLLLIAPLF), and 524–544 (LLSTEIGLLVGVCFSMFCVIL). The 152-residue stretch at 568–719 (TYKNLRSKSG…YSLSEAVAFA (152 aa)) folds into the STAS domain.

Belongs to the SLC26A/SulP transporter (TC 2.A.53) family. N-glycosylated. As to expression, cartilage and intestine. Expressed in the kidney (at protein level).

The protein localises to the cell membrane. Its subcellular location is the apical cell membrane. It catalyses the reaction oxalate(in) + sulfate(out) = oxalate(out) + sulfate(in). The catalysed reaction is sulfate(out) + 2 chloride(in) = sulfate(in) + 2 chloride(out). It carries out the reaction oxalate(out) + 2 chloride(in) = oxalate(in) + 2 chloride(out). The enzyme catalyses bromide(in) + chloride(out) = bromide(out) + chloride(in). It catalyses the reaction nitrate(in) + chloride(out) = nitrate(out) + chloride(in). The catalysed reaction is iodide(in) + chloride(out) = iodide(out) + chloride(in). Its function is as follows. Sulfate transporter which mediates sulfate uptake into chondrocytes in order to maintain adequate sulfation of proteoglycans which is needed for cartilage development. Mediates electroneutral anion exchange of sulfate ions for oxalate ions, sulfate and oxalate ions for chloride and/or hydroxyl ions and chloride ions for bromide, iodide and nitrate ions. The coupling of sulfate transport to both hydroxyl and chloride ions likely serves to ensure transport at both acidic pH when most sulfate uptake is mediated by sulfate-hydroxide exchange and alkaline pH when most sulfate uptake is mediated by sulfate-chloride exchange. Essential for chondrocyte proliferation, differentiation and cell size expansion. This is Sulfate transporter (Slc26a2) from Rattus norvegicus (Rat).